A 566-amino-acid polypeptide reads, in one-letter code: Malate synthase, glyoxysomal (566 aa).

The Proton acceptor role is filled by R182. D467 functions as the Proton donor in the catalytic mechanism. The Microbody targeting signal signature appears at 564-566 (SRL).

This sequence belongs to the malate synthase family.

It localises to the glyoxysome. It catalyses the reaction glyoxylate + acetyl-CoA + H2O = (S)-malate + CoA + H(+). The protein operates within carbohydrate metabolism; glyoxylate cycle; (S)-malate from isocitrate: step 2/2. The polypeptide is Malate synthase, glyoxysomal (Cucurbita maxima (Pumpkin)).